Consider the following 1389-residue polypeptide: uncharacterized protein (1389 aa).

The stretch at 43-94 forms a coiled coil; that stretch reads STIAQRVSQLENEVAEINVALAEHVNELNSQEKRIDKLEKTVKKKKSNCSDD. The interval 294-353 is disordered; that stretch reads HKNRRSKSDNSDLSEYSSSNSDDSECTDSDGSSCSTDGSPDCTESENTESHRSHGKKKHR. 2 stretches are compositionally biased toward low complexity: residues 304–314 and 322–335; these read SDLSEYSSSNS and SDGS…SPDC. WD repeat units follow at residues 867-907, 1017-1056, and 1115-1156; these read TFTD…VKHI, GYNE…TPSG, and GISN…ILST.

Its subcellular location is the virion. This is an uncharacterized protein from Acanthamoeba polyphaga (Amoeba).